The primary structure comprises 80 residues: uncharacterized protein (80 aa).

The protein belongs to the BolA/IbaG family.

This is an uncharacterized protein from Buchnera aphidicola subsp. Schizaphis graminum (strain Sg).